Here is a 1127-residue protein sequence, read N- to C-terminus: Cellulose synthase-like protein D1 (1127 aa).

The disordered stretch occupies residues 1 to 24 (MASKGILKNGGKPPTAPSSAAPTV). 2 helical membrane-spanning segments follow: residues 262 to 282 (VISP…LFLM) and 292 to 312 (AIWL…SWVL). Residues D392 and D828 contribute to the active site. The next 6 membrane-spanning stretches (helical) occupy residues 910–930 (VFLI…QFIV), 936–956 (TFLT…MLEI), 982–1002 (LAAV…SFTL), 1025–1045 (SLMI…AVGF), 1059–1079 (LLGG…FAKG), and 1089–1109 (TIVY…WIAI).

This sequence belongs to the glycosyltransferase 2 family. Plant cellulose synthase-like D subfamily.

The protein localises to the golgi apparatus membrane. Its function is as follows. Thought to be a Golgi-localized beta-glycan synthase that polymerize the backbones of noncellulosic polysaccharides (hemicelluloses) of plant cell wall. This is Cellulose synthase-like protein D1 (CSLD1) from Oryza sativa subsp. indica (Rice).